Here is a 287-residue protein sequence, read N- to C-terminus: Bifunctional protein FolD (287 aa).

Residues G160–S162, S189, and T230 each bind NADP(+).

Belongs to the tetrahydrofolate dehydrogenase/cyclohydrolase family. Homodimer.

It catalyses the reaction (6R)-5,10-methylene-5,6,7,8-tetrahydrofolate + NADP(+) = (6R)-5,10-methenyltetrahydrofolate + NADPH. It carries out the reaction (6R)-5,10-methenyltetrahydrofolate + H2O = (6R)-10-formyltetrahydrofolate + H(+). It functions in the pathway one-carbon metabolism; tetrahydrofolate interconversion. Catalyzes the oxidation of 5,10-methylenetetrahydrofolate to 5,10-methenyltetrahydrofolate and then the hydrolysis of 5,10-methenyltetrahydrofolate to 10-formyltetrahydrofolate. This chain is Bifunctional protein FolD, found in Chlamydia muridarum (strain MoPn / Nigg).